We begin with the raw amino-acid sequence, 181 residues long: Dual-action ribosomal maturation protein DarP (181 aa).

The segment at methionine 1–serine 23 is disordered.

Belongs to the DarP family.

The protein resides in the cytoplasm. Its function is as follows. Member of a network of 50S ribosomal subunit biogenesis factors which assembles along the 30S-50S interface, preventing incorrect 23S rRNA structures from forming. Promotes peptidyl transferase center (PTC) maturation. The protein is Dual-action ribosomal maturation protein DarP of Aeromonas salmonicida (strain A449).